The chain runs to 1002 residues: Spore wall protein 2 (1002 aa).

Residues 1 to 18 (MIKLSLLLSLASFTAVLA) form the signal peptide. An N-linked (GlcNAc...) asparagine glycan is attached at asparagine 308. The segment at 349 to 1002 (TSSGFEDAEE…DNTEEGEETT (654 aa)) is disordered. Residues 354–1002 (EDAEEGEDKD…DNTEEGEETT (649 aa)) show a composition bias toward acidic residues. Repeat copies occupy residues 357 to 368 (EEGEDKDNTGEG), 369 to 380 (EEGEDKDNTGEG), 381 to 392 (EEGEDKDNTGEG), 393 to 404 (EEGEDKDNTGEG), 405 to 416 (EEGEDKDNTGEG), 417 to 428 (EEGEDKDNTGEG), 429 to 440 (EEGEDKDNTGEG), 441 to 452 (EEGEDKDNTGEG), 453 to 464 (EEGEDKDNTGEG), 465 to 476 (EEGEDKDNTGEG), 477 to 488 (EEGEDKDNTGEG), 489 to 500 (EEGEDKDNTGEG), 501 to 512 (EEGEDKDNTGEG), 513 to 524 (EEGEDKDNTGEG), 525 to 536 (EEGEDKDNTGEG), 537 to 548 (EEGEDKDNTGEG), 549 to 560 (EEGEDKDNTGEG), 561 to 572 (EEGEDKDNTGEG), 576 to 587 (EEGEDKDNTGEG), 588 to 599 (EEGEDKDNTGEG), 600 to 611 (EEGEDKDNTGEG), 615 to 626 (EEGEDKDNTGEG), 627 to 638 (EEGEDKDNTGEG), and 639 to 650 (EEGEDKDNTGEG). The 50 X 12 AA tandem repeats of E-E-G-E-D-K-D-N-T-G-E-G stretch occupies residues 357 to 998 (EEGEDKDNTG…GEDKDNTEEG (642 aa)). One copy of the 25; degenerate repeat lies at 651-662 (EEGEDKDNTGDA). A 26; degenerate repeat occupies 663–674 (EEGEEGEDKDST). 22 consecutive repeat copies span residues 678-689 (EEGEDKDNTGEG), 693-704 (EEGEDKDNTGEG), 708-719 (EEGEDKDNTGEG), 723-734 (EEGEDKDNTGEG), 735-746 (EEGEDKDNTGEG), 747-758 (EEGEDKDNTGEG), 759-770 (DEGEDKDNTGEG), 774-785 (EEGEDKDNTGEG), 786-797 (EEGEDKDNTGEG), 801-812 (EEGEDKDNTGEG), 816-827 (EEGEDKDNTGEG), 831-842 (EEGEDKDNTGEG), 843-854 (EEGEDKDNTGEG), 855-866 (EEGEDKDNTGEG), 867-878 (EEGEDKDNTGEG), 882-893 (EEGEDKDNTGEG), 894-905 (EEGEDKDNTGEG), 906-915 (EEGEDKDNTG), 918-929 (EEGEDKDNTGEG), 930-941 (EEGEDKDNTGEG), 942-953 (EEGEDKDNTGEG), and 957-969 (EEGEDKDNTGDAE). The 49; degenerate repeat unit spans residues 972-983 (EEGEDKDNTGDA). A 50; degenerate repeat occupies 987 to 998 (EEGEDKDNTEEG).

As to quaternary structure, component of a complex composed of at least SWP1 and SWP2.

Its subcellular location is the spore. The protein resides in the perispore. Spore wall component. The protein is Spore wall protein 2 (SWP2) of Encephalitozoon intestinalis (Microsporidian parasite).